Reading from the N-terminus, the 146-residue chain is Hemoglobin subunit beta (146 aa).

The 145-residue stretch at 2-146 folds into the Globin domain; the sequence is HWTETERATI…VVAALSREYH (145 aa). Histidine 63 and histidine 92 together coordinate heme b.

It belongs to the globin family. Heterotetramer of two alpha chains and two beta chains (an easy dimerization is also reported). In terms of tissue distribution, red blood cells.

Functionally, involved in oxygen transport from the lung to the various peripheral tissues. The sequence is that of Hemoglobin subunit beta (HBB) from Latimeria chalumnae (Coelacanth).